Reading from the N-terminus, the 411-residue chain is Probable phosphatase HAD1 (411 aa).

Positions 14 to 23 (LPSPNTSQPP) are enriched in polar residues. The segment at 14–33 (LPSPNTSQPPSAAPSRRGSF) is disordered. The active-site Nucleophile is Asp61. Positions 61, 63, and 338 each coordinate Mg(2+). Asp63 serves as the catalytic Proton donor. The interval 296–386 (PRPTPDVTPV…QSGQAGVTLD (91 aa)) is disordered. The segment covering 326-345 (VRNTQTIMKGSDDLTGNDSV) has biased composition (polar residues). Residues 362–373 (SVEKRAEMEFHR) show a composition bias toward basic and acidic residues.

The protein belongs to the HAD-like hydrolase superfamily. In terms of processing, phosphorylated.

Its function is as follows. Probable phosphatase. Required for cell wall integrity and virulence. This is Probable phosphatase HAD1 from Cryptococcus neoformans var. grubii serotype A (strain H99 / ATCC 208821 / CBS 10515 / FGSC 9487) (Filobasidiella neoformans var. grubii).